The primary structure comprises 257 residues: Deoxyribose-phosphate aldolase (257 aa).

Catalysis depends on Asp-102, which acts as the Proton donor/acceptor. Lys-166 serves as the catalytic Schiff-base intermediate with acetaldehyde. Residue Lys-198 is the Proton donor/acceptor of the active site.

The protein belongs to the DeoC/FbaB aldolase family. DeoC type 2 subfamily.

It is found in the cytoplasm. The enzyme catalyses 2-deoxy-D-ribose 5-phosphate = D-glyceraldehyde 3-phosphate + acetaldehyde. It functions in the pathway carbohydrate degradation; 2-deoxy-D-ribose 1-phosphate degradation; D-glyceraldehyde 3-phosphate and acetaldehyde from 2-deoxy-alpha-D-ribose 1-phosphate: step 2/2. In terms of biological role, catalyzes a reversible aldol reaction between acetaldehyde and D-glyceraldehyde 3-phosphate to generate 2-deoxy-D-ribose 5-phosphate. This chain is Deoxyribose-phosphate aldolase, found in Shewanella sediminis (strain HAW-EB3).